The chain runs to 307 residues: Ribosomal RNA small subunit methyltransferase H (307 aa).

Residues 32-34 (GGH), Asp52, Phe78, Asp99, and Gln106 contribute to the S-adenosyl-L-methionine site.

It belongs to the methyltransferase superfamily. RsmH family.

The protein localises to the cytoplasm. The catalysed reaction is cytidine(1402) in 16S rRNA + S-adenosyl-L-methionine = N(4)-methylcytidine(1402) in 16S rRNA + S-adenosyl-L-homocysteine + H(+). Specifically methylates the N4 position of cytidine in position 1402 (C1402) of 16S rRNA. This Caldicellulosiruptor saccharolyticus (strain ATCC 43494 / DSM 8903 / Tp8T 6331) protein is Ribosomal RNA small subunit methyltransferase H.